Consider the following 473-residue polypeptide: Ribosomal RNA small subunit methyltransferase F (473 aa).

S-adenosyl-L-methionine is bound by residues 123–129 (AAAPGSK), E147, D174, and D192. C245 serves as the catalytic Nucleophile.

Belongs to the class I-like SAM-binding methyltransferase superfamily. RsmB/NOP family.

It localises to the cytoplasm. It carries out the reaction cytidine(1407) in 16S rRNA + S-adenosyl-L-methionine = 5-methylcytidine(1407) in 16S rRNA + S-adenosyl-L-homocysteine + H(+). Functionally, specifically methylates the cytosine at position 1407 (m5C1407) of 16S rRNA. This chain is Ribosomal RNA small subunit methyltransferase F, found in Vibrio atlanticus (strain LGP32) (Vibrio splendidus (strain Mel32)).